The sequence spans 532 residues: Sodium-dependent lysophosphatidylcholine symporter 1-A (532 aa).

The Cytoplasmic portion of the chain corresponds to M1–A40. Residues L41–F70 form a helical membrane-spanning segment. The Extracellular portion of the chain corresponds to L71–N81. The chain crosses the membrane as a helical span at residues A82–F102. Residues L103 to R114 are Cytoplasmic-facing. A helical membrane pass occupies residues M115–W134. Residues V135–M144 lie on the Extracellular side of the membrane. A helical transmembrane segment spans residues M145 to T169. The Cytoplasmic portion of the chain corresponds to M170–Q176. The helical transmembrane segment at R177 to A208 threads the bilayer. The Extracellular segment spans residues N209–H232. A disulfide bridge connects residues C212 and C464. N-linked (GlcNAc...) asparagine glycosylation is found at N214, N220, and N229. A helical transmembrane segment spans residues I233–F266. Residues G267–P297 are Cytoplasmic-facing. Residues Y298–K324 form a helical membrane-spanning segment. Topologically, residues Y325–N335 are extracellular. A helical membrane pass occupies residues I336–F354. Residues L355–F358 lie on the Cytoplasmic side of the membrane. The helical transmembrane segment at G359–S380 threads the bilayer. The Extracellular portion of the chain corresponds to V381–S383. A helical transmembrane segment spans residues S384–Q420. Residues N421–I430 lie on the Cytoplasmic side of the membrane. The chain crosses the membrane as a helical span at residues F431–A457. Residues G458–S469 are Extracellular-facing. A helical transmembrane segment spans residues V470–F493. Over M494–A532 the chain is Cytoplasmic.

This sequence belongs to the major facilitator superfamily. In terms of tissue distribution, expressed in the developing nervous system.

It is found in the cell membrane. The protein localises to the endoplasmic reticulum membrane. The enzyme catalyses a 1-acyl-sn-glycero-3-phosphocholine(in) + Na(+)(in) = a 1-acyl-sn-glycero-3-phosphocholine(out) + Na(+)(out). It carries out the reaction 1-(4Z,7Z,10Z,13Z,16Z,19Z-docosahexaenoyl)-sn-glycero-3-phosphocholine(in) + Na(+)(in) = 1-(4Z,7Z,10Z,13Z,16Z,19Z-docosahexaenoyl)-sn-glycero-3-phosphocholine(out) + Na(+)(out). The catalysed reaction is 1-(9Z-octadecenoyl)-sn-glycero-3-phosphocholine(in) + Na(+)(in) = 1-(9Z-octadecenoyl)-sn-glycero-3-phosphocholine(out) + Na(+)(out). It catalyses the reaction 1-hexadecanoyl-sn-glycero-3-phosphocholine(in) + Na(+)(in) = 1-hexadecanoyl-sn-glycero-3-phosphocholine(out) + Na(+)(out). The enzyme catalyses a 1-acyl-sn-glycero-3-phosphoethanolamine(in) + Na(+)(in) = a 1-acyl-sn-glycero-3-phosphoethanolamine(out) + Na(+)(out). Functionally, sodium-dependent lysophosphatidylcholine (LPC) symporter, which plays an essential role for blood-brain barrier formation and function. Specifically expressed in endothelium of the blood-brain barrier of micro-vessels and transports LPC into the brain. Transport of LPC is essential because it constitutes the major mechanism by which docosahexaenoic acid (DHA), an omega-3 fatty acid that is essential for normal brain growth and cognitive function, enters the brain. Transports LPC carrying long-chain fatty acids such LPC oleate and LPC palmitate with a minimum acyl chain length of 14 carbons. Does not transport docosahexaenoic acid in unesterified fatty acid. This chain is Sodium-dependent lysophosphatidylcholine symporter 1-A (mfsd2aa), found in Danio rerio (Zebrafish).